The primary structure comprises 473 residues: 23S rRNA (uracil(1939)-C(5))-methyltransferase RlmD (473 aa).

Residues 6–27 (KPSKGKNKSNVKGRVRGAGSGE) form a disordered region. Residues 8 to 20 (SKGKNKSNVKGRV) are compositionally biased toward basic residues. In terms of domain architecture, TRAM spans 42–99 (DDINAANEAVTIDGMDWQGQGVARGDTLYFVDGALPGETVEIKALSSNKQIVNAKVTK). Positions 112, 118, 121, and 199 each coordinate [4Fe-4S] cluster. Residues Gln-304, Phe-333, Asn-338, Glu-354, Asp-381, and Asp-402 each contribute to the S-adenosyl-L-methionine site. Catalysis depends on Cys-428, which acts as the Nucleophile.

The protein belongs to the class I-like SAM-binding methyltransferase superfamily. RNA M5U methyltransferase family. RlmD subfamily.

The enzyme catalyses uridine(1939) in 23S rRNA + S-adenosyl-L-methionine = 5-methyluridine(1939) in 23S rRNA + S-adenosyl-L-homocysteine + H(+). Catalyzes the formation of 5-methyl-uridine at position 1939 (m5U1939) in 23S rRNA. This chain is 23S rRNA (uracil(1939)-C(5))-methyltransferase RlmD, found in Alteromonas naphthalenivorans.